Consider the following 73-residue polypeptide: Conotoxin Im14.3 (73 aa).

The signal sequence occupies residues Met1–Leu17. The propeptide occupies Ser18–Arg35. The segment at Gly22–Asp42 is disordered. Over residues Glu27–Asp38 the composition is skewed to basic and acidic residues. The region spanning Cys44–Lys73 is the ShKT domain.

Post-translationally, contain 2 disulfide bonds. As to expression, expressed by the venom duct.

The protein localises to the secreted. In terms of biological role, probable neurotoxin. In Conus imperialis (Imperial cone), this protein is Conotoxin Im14.3.